Consider the following 260-residue polypeptide: MTTLSPDHLKTLEQSRQRLIQLTHSLGSLITSLNQSDPLPTWSSLQTQASIISNNLQSISTHLSENHELLRSISALPAPEFPTKTHANTLEQLLRTKLDPRVEDWVSRGRKADNSAIQGSSGSTGMFSTLPSASAAGMNAGVVGAGAGGRLSEDDLAALWEWAPVEANSEARRRNWGGNFTLEEKERGIQQVVAELGLKRVLEDDDESEEEDEEMDVGFGGRIDGAPDNAGAAAGEHALPLVPINEILRYMTTGVMPAVR.

The protein belongs to the Mediator complex subunit 8 family. As to quaternary structure, component of the Mediator complex.

It is found in the nucleus. Its function is as follows. Component of the Mediator complex, a coactivator involved in the regulated transcription of nearly all RNA polymerase II-dependent genes. Mediator functions as a bridge to convey information from gene-specific regulatory proteins to the basal RNA polymerase II transcription machinery. Mediator is recruited to promoters by direct interactions with regulatory proteins and serves as a scaffold for the assembly of a functional preinitiation complex with RNA polymerase II and the general transcription factors. This chain is Mediator of RNA polymerase II transcription subunit 8 (med8), found in Emericella nidulans (strain FGSC A4 / ATCC 38163 / CBS 112.46 / NRRL 194 / M139) (Aspergillus nidulans).